A 192-amino-acid chain; its full sequence is A-type ATP synthase subunit E (192 aa).

The disordered stretch occupies residues 1-66; the sequence is MSLDTVVEDI…QERDQKLSSA (66 aa). Over residues 8 to 26 the composition is skewed to basic and acidic residues; sequence EDIRDEARARADEIRSEGE. Positions 27–49 are enriched in acidic residues; that stretch reads ERAEEIIDEAEREADDIVDEAER. A compositionally biased stretch (basic and acidic residues) spans 50–66; sequence EAERKISQERDQKLSSA.

This sequence belongs to the V-ATPase E subunit family. In terms of assembly, has multiple subunits with at least A(3), B(3), C, D, E, F, H, I and proteolipid K(x).

It localises to the cell membrane. Its function is as follows. Component of the A-type ATP synthase that produces ATP from ADP in the presence of a proton gradient across the membrane. The protein is A-type ATP synthase subunit E of Natronomonas pharaonis (strain ATCC 35678 / DSM 2160 / CIP 103997 / JCM 8858 / NBRC 14720 / NCIMB 2260 / Gabara) (Halobacterium pharaonis).